Here is a 554-residue protein sequence, read N- to C-terminus: MTPNLPGFYYDRERRRYFRISENQSISTTGTTNQYRKDNIKRQCVEENYDKKFSMIKKKRQQTLQKYKLSLLNPLERAFRPLSYEKYMIGLNMQYASHSLTEGHHSHSSANVKSLNFPHRIQIGVLANCILLVTQEGCFHSKLVFATNKGYVAGFSSLDNFSEENFFTGFSMAELNPMLKYKSEPTDVFKTMKLERTVAIKEGPSHYFYHNVNTRSNVHTFAIFLQDFSSLKLLKIRQVKLKENCQVHDSLVVGDTLIITVNYRCHFYDLIPETFPNPYIFSPAKSSRKHKSRSDITSLSFCLQEDALSPLKKTNTGVFYLGYRNGDSMAIVFTNITNMTLQYSKTNGMTSESRNQPIRNSLKSVVSIKALNNKGLILISGMADKENVQQLVIADTFLEDILTEIPVVSFKTKFLNVTKDTEILEISDDGRYFIYGSTSARDGKGDFEVFCTTLSGNLDYEKSEGGNITLYPIGGMKNYCRLENFQFESIHLHSAFIPPRYVNPFDAVEPLGEESSTSPYDIPEEALSQKICILIRREDDPYNGANIFITSALT.

This is an uncharacterized protein from Saccharomyces cerevisiae (strain ATCC 204508 / S288c) (Baker's yeast).